The following is a 261-amino-acid chain: Type II restriction enzyme Sau96I (261 aa).

In terms of assembly, monomer.

The catalysed reaction is Endonucleolytic cleavage of DNA to give specific double-stranded fragments with terminal 5'-phosphates.. Functionally, a P subtype restriction enzyme that recognizes the double-stranded sequence 5'-GGNCC-3' and cleaves after G-1. This chain is Type II restriction enzyme Sau96I, found in Staphylococcus aureus.